Consider the following 124-residue polypeptide: Large ribosomal subunit protein bL12 (124 aa).

Positions 102–116 are enriched in basic and acidic residues; sequence MSKEDAEAAKTKLEE. Positions 102-124 are disordered; that stretch reads MSKEDAEAAKTKLEEAGASVELK.

It belongs to the bacterial ribosomal protein bL12 family. As to quaternary structure, homodimer. Part of the ribosomal stalk of the 50S ribosomal subunit. Forms a multimeric L10(L12)X complex, where L10 forms an elongated spine to which 2 to 4 L12 dimers bind in a sequential fashion. Binds GTP-bound translation factors.

Functionally, forms part of the ribosomal stalk which helps the ribosome interact with GTP-bound translation factors. Is thus essential for accurate translation. The polypeptide is Large ribosomal subunit protein bL12 (Chromohalobacter salexigens (strain ATCC BAA-138 / DSM 3043 / CIP 106854 / NCIMB 13768 / 1H11)).